Here is a 152-residue protein sequence, read N- to C-terminus: D-erythrulose-4-phosphate isomerase 2 (152 aa).

Cys70 (proton acceptor) is an active-site residue.

The protein belongs to the LacAB/RpiB family.

The enzyme catalyses D-erythrulose 4-phosphate = D-erythrose 4-phosphate. The protein operates within carbohydrate metabolism; erythritol degradation. Its pathway is carbohydrate metabolism; D-threitol degradation. It functions in the pathway carbohydrate metabolism; L-threitol degradation. In terms of biological role, catalyzes the isomerization of D-erythrulose-4P to D-erythrose-4P. Involved in the degradation pathways of L-threitol, D-threitol and erythritol, that allow M.smegmatis to grow on these compounds as the sole carbon source. The protein is D-erythrulose-4-phosphate isomerase 2 of Mycolicibacterium smegmatis (strain ATCC 700084 / mc(2)155) (Mycobacterium smegmatis).